The chain runs to 136 residues: ATP synthase epsilon chain (136 aa).

A disordered region spans residues 104–136 (AGMEGQPASPEKVKAQQQLNEARARMQASKSAD).

Belongs to the ATPase epsilon chain family. In terms of assembly, F-type ATPases have 2 components, CF(1) - the catalytic core - and CF(0) - the membrane proton channel. CF(1) has five subunits: alpha(3), beta(3), gamma(1), delta(1), epsilon(1). CF(0) has three main subunits: a, b and c.

The protein resides in the cellular thylakoid membrane. In terms of biological role, produces ATP from ADP in the presence of a proton gradient across the membrane. In Synechococcus sp. (strain CC9902), this protein is ATP synthase epsilon chain.